Reading from the N-terminus, the 541-residue chain is Membrane protein insertase YidC (541 aa).

Transmembrane regions (helical) follow at residues 6–26, 356–376, 430–450, 463–483, and 498–518; these read FFLIIAIFLSIFLLWDKWEIT, IIHSWGYSIIILTLLIKLAFY, LPILVQIPVFISLYWVLLEMV, LSAPDPYYILPLIMGISMFIQ, and IMMALPFVFTIFFLWFPSGLV.

Belongs to the OXA1/ALB3/YidC family. Type 1 subfamily. As to quaternary structure, interacts with the Sec translocase complex via SecD. Specifically interacts with transmembrane segments of nascent integral membrane proteins during membrane integration.

The protein localises to the cell inner membrane. Its function is as follows. Required for the insertion and/or proper folding and/or complex formation of integral membrane proteins into the membrane. Involved in integration of membrane proteins that insert both dependently and independently of the Sec translocase complex, as well as at least some lipoproteins. Aids folding of multispanning membrane proteins. This chain is Membrane protein insertase YidC, found in Vesicomyosocius okutanii subsp. Calyptogena okutanii (strain HA).